The chain runs to 570 residues: Sulfite reductase [NADPH] hemoprotein beta-component (570 aa).

[4Fe-4S] cluster contacts are provided by cysteine 434, cysteine 440, cysteine 479, and cysteine 483. Cysteine 483 provides a ligand contact to siroheme.

It belongs to the nitrite and sulfite reductase 4Fe-4S domain family. Alpha(8)-beta(8). The alpha component is a flavoprotein, the beta component is a hemoprotein. Requires siroheme as cofactor. [4Fe-4S] cluster is required as a cofactor.

The enzyme catalyses hydrogen sulfide + 3 NADP(+) + 3 H2O = sulfite + 3 NADPH + 4 H(+). It functions in the pathway sulfur metabolism; hydrogen sulfide biosynthesis; hydrogen sulfide from sulfite (NADPH route): step 1/1. In terms of biological role, component of the sulfite reductase complex that catalyzes the 6-electron reduction of sulfite to sulfide. This is one of several activities required for the biosynthesis of L-cysteine from sulfate. This is Sulfite reductase [NADPH] hemoprotein beta-component from Klebsiella pneumoniae subsp. pneumoniae (strain ATCC 700721 / MGH 78578).